We begin with the raw amino-acid sequence, 481 residues long: Argininosuccinate lyase (481 aa).

Belongs to the lyase 1 family. Argininosuccinate lyase subfamily.

Its subcellular location is the cytoplasm. It carries out the reaction 2-(N(omega)-L-arginino)succinate = fumarate + L-arginine. It functions in the pathway amino-acid biosynthesis; L-arginine biosynthesis; L-arginine from L-ornithine and carbamoyl phosphate: step 3/3. The protein is Argininosuccinate lyase of Methanococcus vannielii (strain ATCC 35089 / DSM 1224 / JCM 13029 / OCM 148 / SB).